The chain runs to 845 residues: Protein translocase subunit SecA (845 aa).

Residues glutamine 85, 103-107 (GEGKT), and aspartate 492 each bind ATP. The interval 787–845 (REQVAQGQAEHPETEQDAAAQSNTSAKRQPVRVDKKVGRNDLCPCGSGKKFKNCHGRNA) is disordered. Zn(2+) is bound by residues cysteine 829, cysteine 831, cysteine 840, and histidine 841. Positions 835 to 845 (KKFKNCHGRNA) are enriched in basic residues.

The protein belongs to the SecA family. As to quaternary structure, monomer and homodimer. Part of the essential Sec protein translocation apparatus which comprises SecA, SecYEG and auxiliary proteins SecDF. Other proteins may also be involved. Requires Zn(2+) as cofactor.

It is found in the cell membrane. The protein localises to the cytoplasm. It catalyses the reaction ATP + H2O + cellular proteinSide 1 = ADP + phosphate + cellular proteinSide 2.. Part of the Sec protein translocase complex. Interacts with the SecYEG preprotein conducting channel. Has a central role in coupling the hydrolysis of ATP to the transfer of proteins into and across the cell membrane, serving as an ATP-driven molecular motor driving the stepwise translocation of polypeptide chains across the membrane. In Enterococcus faecalis (strain ATCC 700802 / V583), this protein is Protein translocase subunit SecA.